Reading from the N-terminus, the 319-residue chain is Tetrahydromethanopterin S-methyltransferase subunit H (319 aa).

The protein belongs to the MtrH family. In terms of assembly, the complex is composed of 8 subunits; MtrA, MtrB, MtrC, MtrD, MtrE, MtrF, MtrG and MtrH.

It catalyses the reaction 5-methyl-5,6,7,8-tetrahydromethanopterin + coenzyme M + 2 Na(+)(in) = 5,6,7,8-tetrahydromethanopterin + methyl-coenzyme M + 2 Na(+)(out). It functions in the pathway one-carbon metabolism; methanogenesis from CO(2); methyl-coenzyme M from 5,10-methylene-5,6,7,8-tetrahydromethanopterin: step 2/2. Functionally, part of a complex that catalyzes the formation of methyl-coenzyme M and tetrahydromethanopterin from coenzyme M and methyl-tetrahydromethanopterin. This is an energy-conserving, sodium-ion translocating step. MtrH catalyzes the transfer of the methyl group from methyl-tetrahydromethanopterin to the corrinoid prosthetic group of MtrA. This chain is Tetrahydromethanopterin S-methyltransferase subunit H, found in Methanococcus aeolicus (strain ATCC BAA-1280 / DSM 17508 / OCM 812 / Nankai-3).